We begin with the raw amino-acid sequence, 1628 residues long: MTSLPEKDQQGEVSVSENQKKLSEEWEPYIDKLVASNRTRDERVESIQELFQKCVIEEKLPVDIFFSIFSLAFERLEEKNTLASYVIDTLWLFDTEWIKNFHEGSHDKAEKRLVSIGKGLKEFLPEEWLLSRLDCKFLENINVVPNGDFLNRKIVRTNTSLLYRQKKFNLLREESEGFSHLMINFFDALTCLRNKSLNEDYLIVQVNKSIISTIGAFDLDPNKVLDLILLLFSENLLDSWRFFLSILRNSPWGPNKERKFWNQLPDREKETFLNNLSNANGIFNFDERFTNTKSIMSQVLGHNLQYMYKEDDENLESYFMMVALLIKYNFISIDNIWAHLSPSDEELGKELGKYKDKLDEQTFKAKGNALTMAAPLPDDEIEDGETMDGQKAEAVPEIKKAKPSQKLGLLKSLLSIGDLSSSLLILGRYPFLLRAYPELSNLYHKLLHISISSIYANYSPLKLLPNDVRERLKQPKFIPEDSRLREITLRPPKEKNLVFSLDPFADRFNKTESEVFYYFENYDEDIPILRNLTEFYNIAIPWLRLSGLALCHDPVIVTKLCRIGQKCVDNSSESRTLWLDIIRSLLLPLITLIDVNTGLSYELFELLSKFDSSTRYALYGEWSSTSMKKFPELKLQNSITEKETKGILRRLTKTNVKQFGRLLAKVCHSNPCTVFSIALNQIETYDNLVEVVVDSARFITALDFDALTFIILSSFSNEFKKRLKSDGTSIAHWLQGLASFCGRVFRRYSSLDCTSIVEYVIKQFKVNQMFDLVILKELLSQMTGLQPWTNLSDNQIQGAAGGPVLRQLSLSLIYENPDVVRKSSMRLFNTLQKNGLATQLLVLLSQKYSTCIYDVTDENSHLKLISSLQDECSDVLYLLMEFLNMVCSPKSYYKLIPSFEQLIQDFHIQPQVAFYLSRYKNLDHSLTGSNTEDAMDIDYENTSSPNTASNPVWSIDNSVITELLPKQIWDYFSPNFYLTFWKLSLYDVFVPLERYEFERSRAFDQIRQTDAANTFYSRHRHDRQKIMQLSNSLQNELKEHINSLESVRKVLQGDCVKWFIPNGVFPNGTRLEHARFNCARYLWTLCIAPRLKMSPHDALYCAKFVKLLHSLGTPNFSTMSFLEILFNSQLPSFIFSMTQREADNFGRFLYEVLYDITSWYRDKILYERECLANGALPGFRLYWSDEQNDPDLSAVLPYNKFVLLFSKWHKYLTSYFESCLLSTEYMHIYNSVIILEKILPCFPLIIESGSALKRAAERLKDEEKREDLKVLALGYFAKLSKKQPEWVSFNSFSGTVRPSNSEKLQRPQQLSVAATSAVDSKTASISEEQAKIDKQKVALNPSAPEFVPDSTPSDAVASETDNKNLVENKAVEKRVEARSSANERKQEERRRKTTPEGNRRALRTRTPTNEDIQRSDSKLREDQSRDRTPQSRSFTNENNDNLRSVSRHTRREPQQAQNLNARREHESQKSDRWRQNGNVNRNPRVSNNNSTNVSRERSSEANHRTSNDNKRDEVTEGKDKNKRQDISGESNSRQNNAISRAGRSNGSNRGNDSRDADGRRSTHYASNKRPRSSDSQSPSNLREEDERENSRRRARQDDRRDRDSRQQRDRPRDRTSRSAREEKRRKIQ.

Basic and acidic residues-rich tracts occupy residues 1–10 and 1360–1399; these read MTSLPEKDQQ and TDNKNLVENKAVEKRVEARSSANERKQEERRRKTTPEGNR. Disordered stretches follow at residues 1 to 21 and 1337 to 1628; these read MTSLPEKDQQGEVSVSENQKK and VALN…RKIQ. Residues T1406 and T1408 each carry the phosphothreonine modification. Residues 1411–1429 show a composition bias toward basic and acidic residues; sequence DIQRSDSKLREDQSRDRTP. Polar residues predominate over residues 1430–1444; that stretch reads QSRSFTNENNDNLRS. Positions 1461–1474 are enriched in basic and acidic residues; sequence ARREHESQKSDRWR. Over residues 1476–1493 the composition is skewed to low complexity; the sequence is NGNVNRNPRVSNNNSTNV. Residues 1494–1526 are compositionally biased toward basic and acidic residues; that stretch reads SRERSSEANHRTSNDNKRDEVTEGKDKNKRQDI. Polar residues predominate over residues 1527–1550; the sequence is SGESNSRQNNAISRAGRSNGSNRG. Residues 1551-1560 are compositionally biased toward basic and acidic residues; that stretch reads NDSRDADGRR. S1577 carries the post-translational modification Phosphoserine. Residues 1581–1628 are compositionally biased toward basic and acidic residues; that stretch reads LREEDERENSRRRARQDDRRDRDSRQQRDRPRDRTSRSAREEKRRKIQ.

This sequence belongs to the THOC2 family. Component of the THO complex. THO associates with DNA and RNA in vitro.

The protein localises to the nucleus. Functionally, component the THO subcomplex of the TREX complex, which operates in coupling transcription elongation to mRNA export. The THO complex is recruited to transcribed genes and moves along the gene with the elongating polymerase during transcription. THO is important for stabilizing nascent RNA in the RNA polymerase II elongation complex by preventing formation of DNA:RNA hybrids behind the elongating polymerase. This Schizosaccharomyces pombe (strain 972 / ATCC 24843) (Fission yeast) protein is THO complex subunit 2 (tho2).